A 201-amino-acid chain; its full sequence is Pyrrolidone-carboxylate peptidase (201 aa).

Residues Glu-78, Cys-141, and His-165 contribute to the active site.

The protein belongs to the peptidase C15 family. Homotetramer.

It is found in the cytoplasm. The enzyme catalyses Release of an N-terminal pyroglutamyl group from a polypeptide, the second amino acid generally not being Pro.. Its function is as follows. Removes 5-oxoproline from various penultimate amino acid residues except L-proline. In Brachyspira hyodysenteriae (strain ATCC 49526 / WA1), this protein is Pyrrolidone-carboxylate peptidase.